A 203-amino-acid polypeptide reads, in one-letter code: Ribonuclease HII (203 aa).

The 190-residue stretch at Gly-14–Leu-203 folds into the RNase H type-2 domain. Residues Asp-20, Glu-21, and Asp-112 each coordinate a divalent metal cation.

This sequence belongs to the RNase HII family. It depends on Mn(2+) as a cofactor. The cofactor is Mg(2+).

It is found in the cytoplasm. It catalyses the reaction Endonucleolytic cleavage to 5'-phosphomonoester.. Endonuclease that specifically degrades the RNA of RNA-DNA hybrids. The polypeptide is Ribonuclease HII (Wolbachia sp. subsp. Brugia malayi (strain TRS)).